Reading from the N-terminus, the 164-residue chain is Thiol peroxidase (164 aa).

The 146-residue stretch at 18–163 (INEGDFAPDF…FDAALAAYKN (146 aa)) folds into the Thioredoxin domain. Residue C60 is the Cysteine sulfenic acid (-SOH) intermediate of the active site. C60 and C93 are joined by a disulfide.

It belongs to the peroxiredoxin family. Tpx subfamily. Homodimer.

It carries out the reaction a hydroperoxide + [thioredoxin]-dithiol = an alcohol + [thioredoxin]-disulfide + H2O. Functionally, thiol-specific peroxidase that catalyzes the reduction of hydrogen peroxide and organic hydroperoxides to water and alcohols, respectively. Plays a role in cell protection against oxidative stress by detoxifying peroxides. The sequence is that of Thiol peroxidase from Staphylococcus aureus (strain COL).